The sequence spans 285 residues: Geranyl diphosphate 2-C-methyltransferase (285 aa).

This sequence belongs to the geranyl diphosphate 2-C-methyltransferase family. It depends on Mg(2+) as a cofactor.

The catalysed reaction is (2E)-geranyl diphosphate + S-adenosyl-L-methionine = (E)-2-methylgeranyl diphosphate + S-adenosyl-L-homocysteine + H(+). Functionally, catalyzes the SAM-dependent methylation of geranyl diphosphate (GPP) to yield (E)-2-methylgeranyl diphosphate (2-MeGPP). In Saccharopolyspora erythraea (strain ATCC 11635 / DSM 40517 / JCM 4748 / NBRC 13426 / NCIMB 8594 / NRRL 2338), this protein is Geranyl diphosphate 2-C-methyltransferase.